Here is a 402-residue protein sequence, read N- to C-terminus: Heat stress transcription factor A-6a (402 aa).

The interval 1–28 (MLKPQTPRARRAAHPNSHMASSSSSSSL) is disordered. Positions 212–258 (EVVSLKRDRAALRAEVIMLKQQYNACKSQLIAMEEMVRNIERRQQQT) form a coiled coil. Residues 216 to 266 (LKRDRAALRAEVIMLKQQYNACKSQLIAMEEMVRNIERRQQQTIGFFAKVL) are hydrophobic repeat HR-A/B. A Nuclear localization signal motif is present at residues 290 to 293 (KRQR). An AHA motif is present at residues 349–358 (DDVWEELDAL).

This sequence belongs to the HSF family. Class A subfamily. As to quaternary structure, homotrimer. Exhibits temperature-dependent phosphorylation.

The protein resides in the nucleus. Functionally, transcriptional regulator that specifically binds DNA of heat shock promoter elements (HSE). The polypeptide is Heat stress transcription factor A-6a (HSFA6B) (Oryza sativa subsp. japonica (Rice)).